A 213-amino-acid polypeptide reads, in one-letter code: Large ribosomal subunit protein uL1 (213 aa).

This sequence belongs to the universal ribosomal protein uL1 family. Part of the 50S ribosomal subunit.

Functionally, binds directly to 23S rRNA. Probably involved in E site tRNA release. In terms of biological role, protein L1 is also a translational repressor protein, it controls the translation of its operon by binding to its mRNA. The sequence is that of Large ribosomal subunit protein uL1 from Picrophilus torridus (strain ATCC 700027 / DSM 9790 / JCM 10055 / NBRC 100828 / KAW 2/3).